Consider the following 71-residue polypeptide: Small ribosomal subunit protein bS18 (71 aa).

Belongs to the bacterial ribosomal protein bS18 family. In terms of assembly, part of the 30S ribosomal subunit. Forms a tight heterodimer with protein bS6.

Its function is as follows. Binds as a heterodimer with protein bS6 to the central domain of the 16S rRNA, where it helps stabilize the platform of the 30S subunit. This chain is Small ribosomal subunit protein bS18, found in Synechococcus elongatus (strain ATCC 33912 / PCC 7942 / FACHB-805) (Anacystis nidulans R2).